Here is a 70-residue protein sequence, read N- to C-terminus: ATP synthase subunit c (70 aa).

Helical transmembrane passes span 5 to 25 (AAAI…GLIV) and 47 to 67 (FIGV…AFMV).

Belongs to the ATPase C chain family. F-type ATPases have 2 components, F(1) - the catalytic core - and F(0) - the membrane proton channel. F(1) has five subunits: alpha(3), beta(3), gamma(1), delta(1), epsilon(1). F(0) has three main subunits: a(1), b(2) and c(10-14). The alpha and beta chains form an alternating ring which encloses part of the gamma chain. F(1) is attached to F(0) by a central stalk formed by the gamma and epsilon chains, while a peripheral stalk is formed by the delta and b chains.

Its subcellular location is the cell membrane. Functionally, f(1)F(0) ATP synthase produces ATP from ADP in the presence of a proton or sodium gradient. F-type ATPases consist of two structural domains, F(1) containing the extramembraneous catalytic core and F(0) containing the membrane proton channel, linked together by a central stalk and a peripheral stalk. During catalysis, ATP synthesis in the catalytic domain of F(1) is coupled via a rotary mechanism of the central stalk subunits to proton translocation. Its function is as follows. Key component of the F(0) channel; it plays a direct role in translocation across the membrane. A homomeric c-ring of between 10-14 subunits forms the central stalk rotor element with the F(1) delta and epsilon subunits. The polypeptide is ATP synthase subunit c (Anoxybacillus flavithermus (strain DSM 21510 / WK1)).